Consider the following 605-residue polypeptide: Copper resistance protein A (605 aa).

A signal peptide (tat-type signal) is located at residues 1 to 41 (MLLKTSRRTFLKGLTLSGVAGSLGVWSFNARSSLSLPVAAS). The Cu cation site is built by H100, H102, H142, and H144. Tandem repeats lie at residues 382-389 (DHSQMGGM), 414-421 (DHSSMAGM), and 422-429 (DHSRMAGM). The 3 X 8 AA tandem repeats of D-H-X-X-M-X-G-M stretch occupies residues 382–429 (DHSQMGGMDNSGEMMSMDGADLPDSGTSSAPMDHSSMAGMDHSRMAGM). Positions 538, 541, 543, 586, 587, 588, 592, and 597 each coordinate Cu cation.

This sequence belongs to the multicopper oxidase family. CopA subfamily. Predicted to be exported by the Tat system. The position of the signal peptide cleavage has not been experimentally proven.

It is found in the periplasm. Functionally, required for the copper-inducible expression of copper resistance. May have oxidase activity. This Escherichia coli protein is Copper resistance protein A (pcoA).